Reading from the N-terminus, the 392-residue chain is Phosphoglycerate kinase (392 aa).

Residues 21 to 23 (DLN), Arg36, 59 to 62 (HLGR), Arg114, and Arg147 contribute to the substrate site. ATP is bound by residues Lys198, Glu320, and 346–349 (GGDT).

The protein belongs to the phosphoglycerate kinase family. In terms of assembly, monomer.

It localises to the cytoplasm. It catalyses the reaction (2R)-3-phosphoglycerate + ATP = (2R)-3-phospho-glyceroyl phosphate + ADP. It functions in the pathway carbohydrate degradation; glycolysis; pyruvate from D-glyceraldehyde 3-phosphate: step 2/5. The polypeptide is Phosphoglycerate kinase (Nitrosomonas eutropha (strain DSM 101675 / C91 / Nm57)).